The primary structure comprises 182 residues: Large ribosomal subunit protein uL6 (182 aa).

The protein belongs to the universal ribosomal protein uL6 family. Part of the 50S ribosomal subunit.

Functionally, this protein binds to the 23S rRNA, and is important in its secondary structure. It is located near the subunit interface in the base of the L7/L12 stalk, and near the tRNA binding site of the peptidyltransferase center. The protein is Large ribosomal subunit protein uL6 of Pelotomaculum thermopropionicum (strain DSM 13744 / JCM 10971 / SI).